A 413-amino-acid polypeptide reads, in one-letter code: Coiled-coil domain-containing protein 83 (413 aa).

2 coiled-coil regions span residues 32–186 and 215–255; these read HCQI…RIIR and IWEN…QLFN.

The sequence is that of Coiled-coil domain-containing protein 83 (CCDC83) from Bos taurus (Bovine).